Reading from the N-terminus, the 493-residue chain is Glycylpeptide N-tetradecanoyltransferase (493 aa).

45–48 (HKFW) contributes to the tetradecanoyl-CoA binding site. The segment at 53–73 (VPQITGSGAPAPIEEGPIDDP) is disordered. Tetradecanoyl-CoA contacts are provided by residues 182-184 (LCV) and 190-194 (SKRLA). The active-site Proton acceptor; via carboxylate is Leu-493.

The protein belongs to the NMT family. Monomer.

The protein localises to the cytoplasm. The enzyme catalyses N-terminal glycyl-[protein] + tetradecanoyl-CoA = N-tetradecanoylglycyl-[protein] + CoA + H(+). Adds a myristoyl group to the N-terminal glycine residue of certain cellular proteins. The protein is Glycylpeptide N-tetradecanoyltransferase of Cryptococcus neoformans var. neoformans serotype D (strain B-3501A) (Filobasidiella neoformans).